Consider the following 762-residue polypeptide: MMSSIVSWWFFWVISAVCILKVEFNIVEGGAYEETKVHIVYLGEKEHNDPELVTSSHLRMLESLLGSKKDASESIVHSYRNGFSGFAAHLTDSQAEQISEHPDVVQVTPNTFYELQTTRTFDYLGLSHSTPKGLLHEAKMGEDIIIGVLDSGVWPESQSFNDKGLGPIPKRWKGMCVDGEDFDSKKHCNKKLIGARYYMDSLFRRNKTDSGIPDTEYMSARESLPHGTHVASTAGGSFVSNVSDNGFGVGTIRGGAPRARIAVYKVCWQRVDRTCASADIIKAMDDAIADGVDLITISIGRPNPVLTEVDVYNQISYGAFHAVAKGIPVLSAGGNFGPGAYTVQNIAPWIITVAATTLDRWYPTPLTLGNNVTLMARTPYKGNEIQGDLMFVYSPDEMTSAAKGKVVLTFTTGSEESQAGYVTKLFQVEAKSVIIAAKRNDVIKVSEGLPIIMVDYEHGSTIWKYLSITRMPTIKISSAIALNGRLVATKVADFSGRGPNSISPYVLKPDVAAPGVAIVAASTPESMGTEEGFAIQSGTSMSTPVVAGLVALLRAVHPDWSPAALKSALITTASTTDPYGEPIFSEGMTRKLADPFDFGGGLVNPNKAADPGLVYDISAEDYRLFLCASHYDEKQITKISKTHTPYRCPSPKPSMLDLNLPSITIPFLKEDVTLTRTVTNVGPVDSVYKLIVEPPLGVKISVTPNTLLFNSNVKILSYKVTVSTTHKSNSIYYFGSLTWTDGSHKVTIPLSVRTQMLMYFDQ.

The N-terminal stretch at Met1–Ala16 is a signal peptide. The propeptide at Val17–Gln116 is activation peptide. The 79-residue stretch at Val37–Leu115 folds into the Inhibitor I9 domain. The region spanning Thr120 to Ala609 is the Peptidase S8 domain. The Charge relay system role is filled by Asp150. Asn206 carries N-linked (GlcNAc...) asparagine glycosylation. His226 functions as the Charge relay system in the catalytic mechanism. Asn241 and Asn371 each carry an N-linked (GlcNAc...) asparagine glycan. Ser540 acts as the Charge relay system in catalysis.

This sequence belongs to the peptidase S8 family.

The protein localises to the secreted. The polypeptide is Subtilisin-like protease SBT3.11 (Arabidopsis thaliana (Mouse-ear cress)).